A 769-amino-acid chain; its full sequence is MTGTPSAPTTSPDDQADGPGEGTVDRQPYRELGLTDDEYERIVATLGRVPTDAELAMYSVMWSEHCSYKSSKVHLRQFRDTPATDRLLVGMGENAGVVDVGEGLAVTFKVESHNHPSFVEPYQGAATGVGGIVRDILTMGARPIGILDPLRFGAADAPDTARVLPGVVAGIGGYGNCLGLPTIGGEVVFDPVYGGNPLVNALCVGVMPVGRVQTSAATGVGNAVVLLGAKTGRDGIGGVSVLASATFDEGGGPARRPSVQVGDPFTEKILIECCLELFDRGLVTGIQDLGGAGLTCALTETTAAGIATGQPGGMEVDLDLVPLREASMAAHEVLASESQERMLAIVTPDALPEVLALAERWGVIATNIGTVTDSGRLVVRWHGEVVVDVPPGSLADDGPVYERPLRRPADLDLLRADAPSALERPRTGDALRATLLRMIASPNLCSRAWVTEQYDRYVQANTVLAQPEDAGVLRLSASGLGIALATDGNGRYARLDPFAGAQLALAEACRNVTAAGAEPIAVTNCLNFGSPEDPEVMWQFAQACAGLADACRRLGLPVTGGNVSFYNQTGSAPIHPTPVVGVLGLFDDVTRRTPIGFTDEGDALLLLGDTRDEFGGSEWAWATHGHLGGTPPAVDLEREKLLGEILVGGSREGLLTAAHDLSEGGLAQALVESCLRGGHGARIELPAGADAFVELFSESAGRAVVAVPAAEQDRFARLCADRGLPCRQIGVVTDGEGGSLNVAGEFAIPLDELRAAHEGTLPRLFGRGA.

The span at 1–13 shows a compositional bias: polar residues; sequence MTGTPSAPTTSPD. The segment at 1 to 30 is disordered; the sequence is MTGTPSAPTTSPDDQADGPGEGTVDRQPYR. His-65 is an active-site residue. ATP-binding residues include Tyr-68 and Lys-109. Glu-111 serves as a coordination point for Mg(2+). Substrate-binding positions include 112–115 and Arg-134; that span reads SHNH. Catalysis depends on His-113, which acts as the Proton acceptor. Asp-135 lines the Mg(2+) pocket. A substrate-binding site is contributed by Gln-260. A Mg(2+)-binding site is contributed by Asp-288. 337–339 serves as a coordination point for substrate; that stretch reads ESQ. Residues Asn-524 and Gly-561 each contribute to the ATP site. Residue Asn-562 coordinates Mg(2+). Ser-564 is a substrate binding site.

This sequence belongs to the FGAMS family. In terms of assembly, monomer. Part of the FGAM synthase complex composed of 1 PurL, 1 PurQ and 2 PurS subunits.

Its subcellular location is the cytoplasm. The catalysed reaction is N(2)-formyl-N(1)-(5-phospho-beta-D-ribosyl)glycinamide + L-glutamine + ATP + H2O = 2-formamido-N(1)-(5-O-phospho-beta-D-ribosyl)acetamidine + L-glutamate + ADP + phosphate + H(+). Its pathway is purine metabolism; IMP biosynthesis via de novo pathway; 5-amino-1-(5-phospho-D-ribosyl)imidazole from N(2)-formyl-N(1)-(5-phospho-D-ribosyl)glycinamide: step 1/2. Part of the phosphoribosylformylglycinamidine synthase complex involved in the purines biosynthetic pathway. Catalyzes the ATP-dependent conversion of formylglycinamide ribonucleotide (FGAR) and glutamine to yield formylglycinamidine ribonucleotide (FGAM) and glutamate. The FGAM synthase complex is composed of three subunits. PurQ produces an ammonia molecule by converting glutamine to glutamate. PurL transfers the ammonia molecule to FGAR to form FGAM in an ATP-dependent manner. PurS interacts with PurQ and PurL and is thought to assist in the transfer of the ammonia molecule from PurQ to PurL. This is Phosphoribosylformylglycinamidine synthase subunit PurL from Parafrankia sp. (strain EAN1pec).